We begin with the raw amino-acid sequence, 267 residues long: Flap endonuclease Xni (267 aa).

Residue aspartate 115 coordinates Mg(2+). The 5'-3' exonuclease domain maps to 171-261 (VAPAQLVDFW…LGFNLREIRY (91 aa)). Residues leucine 182, valine 193, and isoleucine 196 each coordinate K(+). Residues 195–200 (GIGPKT) form an interaction with DNA region.

Belongs to the Xni family. The cofactor is Mg(2+). Requires K(+) as cofactor.

In terms of biological role, has flap endonuclease activity. During DNA replication, flap endonucleases cleave the 5'-overhanging flap structure that is generated by displacement synthesis when DNA polymerase encounters the 5'-end of a downstream Okazaki fragment. The polypeptide is Flap endonuclease Xni (Aeromonas hydrophila subsp. hydrophila (strain ATCC 7966 / DSM 30187 / BCRC 13018 / CCUG 14551 / JCM 1027 / KCTC 2358 / NCIMB 9240 / NCTC 8049)).